The sequence spans 569 residues: Proline--tRNA ligase (569 aa).

The protein belongs to the class-II aminoacyl-tRNA synthetase family. ProS type 1 subfamily. In terms of assembly, homodimer.

The protein localises to the cytoplasm. The enzyme catalyses tRNA(Pro) + L-proline + ATP = L-prolyl-tRNA(Pro) + AMP + diphosphate. Catalyzes the attachment of proline to tRNA(Pro) in a two-step reaction: proline is first activated by ATP to form Pro-AMP and then transferred to the acceptor end of tRNA(Pro). As ProRS can inadvertently accommodate and process non-cognate amino acids such as alanine and cysteine, to avoid such errors it has two additional distinct editing activities against alanine. One activity is designated as 'pretransfer' editing and involves the tRNA(Pro)-independent hydrolysis of activated Ala-AMP. The other activity is designated 'posttransfer' editing and involves deacylation of mischarged Ala-tRNA(Pro). The misacylated Cys-tRNA(Pro) is not edited by ProRS. The polypeptide is Proline--tRNA ligase (Nitrosospira multiformis (strain ATCC 25196 / NCIMB 11849 / C 71)).